We begin with the raw amino-acid sequence, 144 residues long: Large ribosomal subunit protein uL11 (144 aa).

This sequence belongs to the universal ribosomal protein uL11 family. As to quaternary structure, part of the ribosomal stalk of the 50S ribosomal subunit. Interacts with L10 and the large rRNA to form the base of the stalk. L10 forms an elongated spine to which L12 dimers bind in a sequential fashion forming a multimeric L10(L12)X complex. One or more lysine residues are methylated.

Its function is as follows. Forms part of the ribosomal stalk which helps the ribosome interact with GTP-bound translation factors. This chain is Large ribosomal subunit protein uL11, found in Polaromonas sp. (strain JS666 / ATCC BAA-500).